The following is a 937-amino-acid chain: Putative leucine-rich repeat receptor-like serine/threonine-protein kinase At3g53590 (937 aa).

Positions 1–20 (MIPPNINVLIRSICINLVTS) are cleaved as a signal peptide. Residues 21–547 (LPLNFAYIFI…LLAQTSGIRT (527 aa)) are Extracellular-facing. 4 N-linked (GlcNAc...) asparagine glycosylation sites follow: Asn-50, Asn-63, Asn-90, and Asn-114. LRR repeat units follow at residues 102–126 (LLYL…IGRI), 127–150 (SSLK…LGNL), 152–173 (NLNR…SFGN), 174–198 (LRSI…LSKL), 200–222 (KLVH…LAQL), 223–249 (PSLT…HFSR), 251–270 (VKLS…LSRI), and 271–294 (ENLS…KLSD). N-linked (GlcNAc...) asparagine glycosylation is found at Asn-162, Asn-184, and Asn-210. N-linked (GlcNAc...) asparagine glycans are attached at residues Asn-272 and Asn-295. 3 LRR repeats span residues 296–316 (MTTI…SFSD), 317–341 (LNSL…IWQD), and 343–360 (SFEN…NFSD). N-linked (GlcNAc...) asparagine glycosylation is found at Asn-327, Asn-357, Asn-370, Asn-413, Asn-499, and Asn-516. A helical membrane pass occupies residues 548–568 (IVWMMIVAGSVVAATVLSVTA). At 569–937 (TLLYVRKRRE…SGFFHAVKPR (369 aa)) the chain is on the cytoplasmic side. Positions 614–886 (FDSSTLIGRG…SKVVKELEGI (273 aa)) constitute a Protein kinase domain. ATP contacts are provided by residues 620 to 628 (IGRGSYGKV) and Lys-642. The active-site Proton acceptor is the Asp-738.

This sequence belongs to the protein kinase superfamily. Ser/Thr protein kinase family.

The protein resides in the cell membrane. The enzyme catalyses L-seryl-[protein] + ATP = O-phospho-L-seryl-[protein] + ADP + H(+). It carries out the reaction L-threonyl-[protein] + ATP = O-phospho-L-threonyl-[protein] + ADP + H(+). This is Putative leucine-rich repeat receptor-like serine/threonine-protein kinase At3g53590 from Arabidopsis thaliana (Mouse-ear cress).